A 102-amino-acid chain; its full sequence is Acylphosphatase 1 (102 aa).

The Acylphosphatase-like domain occupies T12 to P100. Catalysis depends on residues R27 and N45.

It belongs to the acylphosphatase family.

The catalysed reaction is an acyl phosphate + H2O = a carboxylate + phosphate + H(+). This Ralstonia nicotianae (strain ATCC BAA-1114 / GMI1000) (Ralstonia solanacearum) protein is Acylphosphatase 1 (acyP1).